The following is a 424-amino-acid chain: Na(+), Li(+), K(+)/H(+) antiporter (424 aa).

Helical transmembrane passes span 15–35 (VGEFFMNTSFWMVFPFLAIYF), 42–62 (GLAGMLLIISQIFSVAANLFG), 74–94 (MLVSAAVAQGFAFLLFALANS), 105–125 (VAFTLAGMCGSLYWPASQAMI), 141–161 (FYTTLNIAVVIGPLFGAVLFF), 165–185 (FELLLTVAIISVLLGLLLRFY), 227–247 (LLFVIAGILGAQTFMQLDLVI), 274–294 (TSFGILLAENGLIVALLTVVI), 305–325 (WVFFFSALLFGLSMAIFPMTS), 327–347 (FWIFFVAMAVFTFAELMVVGL), 367–389 (AASLRYTIGRMIAPISIPMTAWF), and 393–415 (WTFIILGSFAVLSGFVYLWMFHL).

Belongs to the major facilitator superfamily.

The protein resides in the cell membrane. With respect to regulation, norfloxacin transport is inhibited by CCCP. Exhibits dual functions as a Na(+)(Li(+)/K(+))/H(+) antiporter and a multidrug efflux pump. Catalyzes the efflux of Na(+), Li(+) and K(+) in exchange for external protons. Shows a preference for Na(+), followed by K(+) and Li(+). Can also function as a multidrug efflux pump. Transports ethidium bromide and norfloxacin. This chain is Na(+), Li(+), K(+)/H(+) antiporter, found in Planococcus maritimus.